The primary structure comprises 381 residues: Putative acetyl-CoA C-acetyltransferase VraB (381 aa).

C86 serves as the catalytic Acyl-thioester intermediate. The active-site Proton acceptor is H338.

It belongs to the thiolase-like superfamily. Thiolase family.

This chain is Putative acetyl-CoA C-acetyltransferase VraB (vraB), found in Staphylococcus haemolyticus (strain JCSC1435).